Consider the following 289-residue polypeptide: Esterase GA18864 (289 aa).

The segment covering 1-19 has biased composition (low complexity); that stretch reads MTNNDAAVEAPSSSRASSS. Residues 1–24 form a disordered region; the sequence is MTNNDAAVEAPSSSRASSSKQQPK. Active-site charge relay system residues include Ser-133, Asp-191, and His-218. The interval 253 to 289 is disordered; it reads VSFIESGAEDNDDDGDANDAEVAAATAAAGSDLDDSD. The span at 259–271 shows a compositional bias: acidic residues; that stretch reads GAEDNDDDGDAND. Over residues 272-283 the composition is skewed to low complexity; it reads AEVAAATAAAGS.

It belongs to the LovG family.

This chain is Esterase GA18864, found in Drosophila pseudoobscura pseudoobscura (Fruit fly).